A 722-amino-acid polypeptide reads, in one-letter code: Probable glycerol-3-phosphate dehydrogenase, mitochondrial (722 aa).

The transit peptide at 1–43 (MSWVRFTKTGVAVVATSAAAVLALDMTNERRFQRQVKDHFRTV) directs the protein to the mitochondrion. FAD is bound at residue 76–104 (DVLIIGGGATGAGVALDAQTRGLKTALVE). EF-hand domains follow at residues 624 to 659 (EEMQ…HNQK) and 660 to 695 (IDER…LKGG). 5 residues coordinate Ca(2+): D673, N675, N677, E679, and E684.

This sequence belongs to the FAD-dependent glycerol-3-phosphate dehydrogenase family. FAD serves as cofactor.

Its subcellular location is the mitochondrion. It catalyses the reaction a quinone + sn-glycerol 3-phosphate = dihydroxyacetone phosphate + a quinol. It participates in polyol metabolism; glycerol degradation via glycerol kinase pathway; glycerone phosphate from sn-glycerol 3-phosphate (anaerobic route): step 1/1. With respect to regulation, calcium-binding enhances the activity of the enzyme. The sequence is that of Probable glycerol-3-phosphate dehydrogenase, mitochondrial from Caenorhabditis elegans.